We begin with the raw amino-acid sequence, 504 residues long: Light-independent protochlorophyllide reductase subunit B (504 aa).

[4Fe-4S] cluster is bound at residue Asp36. Asp279 (proton donor) is an active-site residue. 414–415 (GL) serves as a coordination point for substrate.

This sequence belongs to the ChlB/BchB/BchZ family. As to quaternary structure, protochlorophyllide reductase is composed of three subunits; BchL, BchN and BchB. Forms a heterotetramer of two BchB and two BchN subunits. Requires [4Fe-4S] cluster as cofactor.

It catalyses the reaction chlorophyllide a + oxidized 2[4Fe-4S]-[ferredoxin] + 2 ADP + 2 phosphate = protochlorophyllide a + reduced 2[4Fe-4S]-[ferredoxin] + 2 ATP + 2 H2O. It participates in porphyrin-containing compound metabolism; bacteriochlorophyll biosynthesis (light-independent). Its function is as follows. Component of the dark-operative protochlorophyllide reductase (DPOR) that uses Mg-ATP and reduced ferredoxin to reduce ring D of protochlorophyllide (Pchlide) to form chlorophyllide a (Chlide). This reaction is light-independent. The NB-protein (BchN-BchB) is the catalytic component of the complex. This is Light-independent protochlorophyllide reductase subunit B from Acidiphilium rubrum.